The sequence spans 549 residues: GPI mannosyltransferase 3 (549 aa).

Residues 1-39 (MAYNNSVRKRKKDIQDANGFHRDQTIDKKSRATNKLEES) lie on the Cytoplasmic side of the membrane. The chain crosses the membrane as a helical span at residues 40 to 60 (LPTFKVFIVLFFIRLLNSLTI). Over 61-119 (KTFFQADEYYQCLEPAYNFVFGSGYITWEWEEGIRSSIHPLIYALGYKMVSYVHFDDKP) the chain is Lumenal. A helical membrane pass occupies residues 120–140 (IILIPKVIGALIASIGEVYLY). Residues 141–154 (KFSKKFTKNEKLAR) are Cytoplasmic-facing. A helical membrane pass occupies residues 155-175 (LTLILSLLSPFNWYIITRSFS). Over 176–205 (NSFEMVLTTIAFTYWPWDNVISYKDISMSC) the chain is Lumenal. A helical transmembrane segment spans residues 206–226 (IIAFISCIVRPTNGIIWLYLG). Topologically, residues 227–246 (INFMIKNYKLEKQSGKLMKL) are cytoplasmic. A helical transmembrane segment spans residues 247 to 267 (ILILSIELILILLVNTGLDYI). Residues 268 to 289 (FYGKTTFPLYNFVEFNVIRNLS) are Lumenal-facing. Residue asparagine 287 is glycosylated (N-linked (GlcNAc...) asparagine). A helical membrane pass occupies residues 290 to 310 (IFYGVAPWHFYLFQGVPIILM). At 311-328 (TYLPWLLHSAIVLKKYKS) the chain is on the cytoplasmic side. A helical membrane pass occupies residues 329–349 (LLGQVAILMIGGFSLIDHKEI). Residue arginine 350 is a topological domain, lumenal. The chain crosses the membrane as a helical span at residues 351-367 (FIYPLQPIFMLMVAYSI). At 368–379 (HETKHKFQRLYK) the chain is on the cytoplasmic side. A helical membrane pass occupies residues 380–400 (FLVPVIIILNLIIAIFFTQVH). The Lumenal portion of the chain corresponds to 401–549 (ERGVIDIVQY…KGDIIVYCQI (149 aa)). Asparagine 442 carries an N-linked (GlcNAc...) asparagine glycan.

The protein belongs to the glycosyltransferase 22 family. PIGB subfamily.

Its subcellular location is the endoplasmic reticulum membrane. Its pathway is glycolipid biosynthesis; glycosylphosphatidylinositol-anchor biosynthesis. Mannosyltransferase involved in glycosylphosphatidylinositol-anchor biosynthesis. Transfers the third mannose to Man2-GlcN-acyl-PI during GPI precursor assembly. The polypeptide is GPI mannosyltransferase 3 (GPI10) (Debaryomyces hansenii (strain ATCC 36239 / CBS 767 / BCRC 21394 / JCM 1990 / NBRC 0083 / IGC 2968) (Yeast)).